A 1086-amino-acid chain; its full sequence is Fused isobutyryl-CoA mutase (1086 aa).

Residues 10 to 140 enclose the B12-binding domain; sequence HVRFVTASSL…QGMINVMLEE (131 aa). His-23 lines the adenosylcob(III)alamin pocket. Residues 153-407 form a GTPase chaperone MeaI region; that stretch reads LERLPSGDVQ…FVALVDTINK (255 aa). 210–215 is a binding site for GTP; sequence GAGKSS. Mg(2+) contacts are provided by Ser-214, Val-238, Asp-239, and Asp-252. A GTP-binding site is contributed by Arg-255. Mg(2+) contacts are provided by Glu-300 and Thr-301. Residue 347-350 participates in GTP binding; the sequence is NKFE. The tract at residues 408-570 is linker; that stretch reads KAGTNWKTSL…YKENVPGSFP (163 aa). Substrate-binding residues include Phe-578, Arg-613, Arg-719, Tyr-763, Ser-812, Arg-847, and Lys-852. Residues Glu-964 and Asn-1085 each coordinate GTP.

Belongs to the IcmF family. Homodimer. Requires adenosylcob(III)alamin as cofactor. The cofactor is Mg(2+).

It carries out the reaction 2-methylpropanoyl-CoA = butanoyl-CoA. The enzyme catalyses 3-methylbutanoyl-CoA = 2,2-dimethylpropanoyl-CoA. The catalysed reaction is GTP + H2O = GDP + phosphate + H(+). Catalyzes the reversible interconversion of isobutyryl-CoA and n-butyryl-CoA, and to a lesser extent, of pivalyl-CoA and isovaleryl-CoA, using radical chemistry. Also exhibits GTPase activity, associated with its G-protein domain (MeaI) that functions as a chaperone that assists cofactor delivery and proper holo-enzyme assembly. Also displays ATPase activity. Is not able to convert 3-hydroxybutyryl-CoA to 2-hydroxyisobutyryl-CoA. Does not exhibit methylmalonyl-CoA mutase (MCM) activity. The polypeptide is Fused isobutyryl-CoA mutase (Geobacillus kaustophilus (strain HTA426)).